The following is a 132-amino-acid chain: Translation initiation factor 5A (132 aa).

Lysine 36 carries the hypusine modification.

The protein belongs to the eIF-5A family.

The protein resides in the cytoplasm. Functionally, functions by promoting the formation of the first peptide bond. This chain is Translation initiation factor 5A (eIF5A), found in Pyrobaculum neutrophilum (strain DSM 2338 / JCM 9278 / NBRC 100436 / V24Sta) (Thermoproteus neutrophilus).